Here is a 66-residue protein sequence, read N- to C-terminus: Large ribosomal subunit protein bL35 (66 aa).

The segment at 20-41 (GKVMSAQRGKRHGMIKRTKKQI) is disordered. Over residues 27 to 41 (RGKRHGMIKRTKKQI) the composition is skewed to basic residues.

This sequence belongs to the bacterial ribosomal protein bL35 family.

This Rhodopseudomonas palustris (strain BisB5) protein is Large ribosomal subunit protein bL35.